The primary structure comprises 482 residues: Anthranilate synthase component 1 (482 aa).

L-tryptophan is bound by residues serine 47 and 267–269; that span reads PYM. 302–303 is a chorismate binding site; that stretch reads GT. Residue glutamate 329 coordinates Mg(2+). Residues tyrosine 417, arginine 437, 451–453, and glycine 453 contribute to the chorismate site; that span reads GGG. Glutamate 466 is a binding site for Mg(2+).

This sequence belongs to the anthranilate synthase component I family. As to quaternary structure, heterotetramer consisting of two non-identical subunits: a beta subunit (TrpG) and a large alpha subunit (TrpE). The cofactor is Mg(2+).

It carries out the reaction chorismate + L-glutamine = anthranilate + pyruvate + L-glutamate + H(+). Its pathway is amino-acid biosynthesis; L-tryptophan biosynthesis; L-tryptophan from chorismate: step 1/5. With respect to regulation, feedback inhibited by tryptophan. In terms of biological role, part of a heterotetrameric complex that catalyzes the two-step biosynthesis of anthranilate, an intermediate in the biosynthesis of L-tryptophan. In the first step, the glutamine-binding beta subunit (TrpG) of anthranilate synthase (AS) provides the glutamine amidotransferase activity which generates ammonia as a substrate that, along with chorismate, is used in the second step, catalyzed by the large alpha subunit of AS (TrpE) to produce anthranilate. In the absence of TrpG, TrpE can synthesize anthranilate directly from chorismate and high concentrations of ammonia. This is Anthranilate synthase component 1 (trpE) from Spirochaeta aurantia.